We begin with the raw amino-acid sequence, 571 residues long: La-related protein 7 (571 aa).

The residue at position 1 (methionine 1) is an N-acetylmethionine. A compositionally biased stretch (basic and acidic residues) spans 1-17; it reads METENQKTMEESTEKRK. 2 disordered regions span residues 1 to 25 and 181 to 366; these read METE…KRSR and LNNP…ERHK. One can recognise an HTH La-type RNA-binding domain in the interval 23–117; it reads RSRVKQVLAD…KPLGERPKDE (95 aa). The RRM domain maps to 120–198; it reads RTVYVELLPK…PRKPGIFPKT (79 aa). Positions 214–223 are enriched in basic residues; that stretch reads KKKKKKKGRI. A Glycyl lysine isopeptide (Lys-Gly) (interchain with G-Cter in SUMO2) cross-link involves residue lysine 232. Threonine 252 carries the phosphothreonine modification. Phosphoserine is present on residues serine 254 and serine 257. At threonine 261 the chain carries Phosphothreonine. Basic and acidic residues predominate over residues 287-296; that stretch reads KAGKRERSSA. Phosphoserine occurs at positions 294, 295, and 335. Threonine 336 carries the phosphothreonine modification. Basic and acidic residues predominate over residues 342-351; the sequence is PGDRKGDSLS. At serine 349 the chain carries Phosphoserine. The segment covering 352 to 365 has biased composition (basic residues); that stretch reads KGKRKHKKKHKERH. Lysine 408 is covalently cross-linked (Glycyl lysine isopeptide (Lys-Gly) (interchain with G-Cter in SUMO2)). The disordered stretch occupies residues 411–432; it reads SEMETESKAPPGSGQQCSTQEK. Residues 423-432 show a composition bias toward polar residues; it reads SGQQCSTQEK. The xRRM domain occupies 439–552; that stretch reads QFVTGVIVKI…TEKLITKAEK (114 aa).

It belongs to the LARP7 family. In terms of assembly, core component of the 7SK RNP complex, at least composed of 7SK RNA, LARP7, MEPCE, HEXIM1 (or HEXIM2) and P-TEFb (composed of CDK9 and CCNT1/cyclin-T1). Interacts with METTL16. Interacts with RBM7; upon genotoxic stress this interaction is enhanced, triggering the release of inactive P-TEFb complex from the core, yielding to P-TEFb complex activation. Associates with box C/D small nucleolar ribonucleoprotein (snoRNP) complexes.

Its subcellular location is the nucleus. It is found in the nucleoplasm. In terms of biological role, RNA-binding protein that specifically binds distinct small nuclear RNA (snRNAs) and regulates their processing and function. Specifically binds the 7SK snRNA (7SK RNA) and acts as a core component of the 7SK ribonucleoprotein (RNP) complex, thereby acting as a negative regulator of transcription elongation by RNA polymerase II. The 7SK RNP complex sequesters the positive transcription elongation factor b (P-TEFb) in a large inactive 7SK RNP complex preventing RNA polymerase II phosphorylation and subsequent transcriptional elongation. The 7SK RNP complex also promotes snRNA gene transcription by RNA polymerase II via interaction with the little elongation complex (LEC). LARP7 specifically binds to the highly conserved 3'-terminal U-rich stretch of 7SK RNA; on stimulation, remains associated with 7SK RNA, whereas P-TEFb is released from the complex. LARP7 also acts as a regulator of mRNA splicing fidelity by promoting U6 snRNA processing. Specifically binds U6 snRNAs and associates with a subset of box C/D RNP complexes: promotes U6 snRNA 2'-O-methylation by facilitating U6 snRNA loading into box C/D RNP complexes. U6 snRNA 2'-O-methylation is required for mRNA splicing fidelity. Binds U6 snRNAs with a 5'-CAGGG-3' sequence motif. U6 snRNA processing is required for spermatogenesis. This Rattus norvegicus (Rat) protein is La-related protein 7.